A 313-amino-acid polypeptide reads, in one-letter code: Glyoxylate/hydroxypyruvate reductase A (313 aa).

Arg-228 is a catalytic residue. His-276 functions as the Proton donor in the catalytic mechanism.

It belongs to the D-isomer specific 2-hydroxyacid dehydrogenase family. GhrA subfamily.

It is found in the cytoplasm. The enzyme catalyses glycolate + NADP(+) = glyoxylate + NADPH + H(+). The catalysed reaction is (R)-glycerate + NAD(+) = 3-hydroxypyruvate + NADH + H(+). It carries out the reaction (R)-glycerate + NADP(+) = 3-hydroxypyruvate + NADPH + H(+). Its function is as follows. Catalyzes the NADPH-dependent reduction of glyoxylate and hydroxypyruvate into glycolate and glycerate, respectively. This is Glyoxylate/hydroxypyruvate reductase A from Photorhabdus laumondii subsp. laumondii (strain DSM 15139 / CIP 105565 / TT01) (Photorhabdus luminescens subsp. laumondii).